Consider the following 370-residue polypeptide: Chaperone protein DnaJ (370 aa).

The J domain occupies 5–69; it reads DYYEVLGVDR…QKKAHYDQFG (65 aa). Residues 128–210 form a CR-type zinc finger; it reads GKETTIEIPR…CGGKGKVRKR (83 aa). Residues Cys141, Cys144, Cys158, Cys161, Cys184, Cys187, Cys198, and Cys201 each coordinate Zn(2+). CXXCXGXG motif repeat units follow at residues 141 to 148, 158 to 165, 184 to 191, and 198 to 205; these read CHTCSGSG, CPHCGGSG, CHHCEGTG, and CATCGGKG.

The protein belongs to the DnaJ family. As to quaternary structure, homodimer. Requires Zn(2+) as cofactor.

It is found in the cytoplasm. Its function is as follows. Participates actively in the response to hyperosmotic and heat shock by preventing the aggregation of stress-denatured proteins and by disaggregating proteins, also in an autonomous, DnaK-independent fashion. Unfolded proteins bind initially to DnaJ; upon interaction with the DnaJ-bound protein, DnaK hydrolyzes its bound ATP, resulting in the formation of a stable complex. GrpE releases ADP from DnaK; ATP binding to DnaK triggers the release of the substrate protein, thus completing the reaction cycle. Several rounds of ATP-dependent interactions between DnaJ, DnaK and GrpE are required for fully efficient folding. Also involved, together with DnaK and GrpE, in the DNA replication of plasmids through activation of initiation proteins. The chain is Chaperone protein DnaJ from Halalkalibacterium halodurans (strain ATCC BAA-125 / DSM 18197 / FERM 7344 / JCM 9153 / C-125) (Bacillus halodurans).